We begin with the raw amino-acid sequence, 469 residues long: Adenosylhomocysteinase (469 aa).

Thr-63, Asp-139, and Glu-164 together coordinate substrate. 165–167 (TTT) serves as a coordination point for NAD(+). Substrate is bound by residues Lys-194 and Asp-198. NAD(+) is bound by residues Asn-199, 228 to 233 (GYGDVG), Glu-251, Asn-300, 321 to 323 (IGH), and Asn-375.

Belongs to the adenosylhomocysteinase family. It depends on NAD(+) as a cofactor.

It localises to the cytoplasm. The enzyme catalyses S-adenosyl-L-homocysteine + H2O = L-homocysteine + adenosine. It participates in amino-acid biosynthesis; L-homocysteine biosynthesis; L-homocysteine from S-adenosyl-L-homocysteine: step 1/1. Its function is as follows. May play a key role in the regulation of the intracellular concentration of adenosylhomocysteine. This is Adenosylhomocysteinase from Pseudomonas fluorescens (strain Pf0-1).